Here is a 146-residue protein sequence, read N- to C-terminus: MITSNITTNAINQVDPKAVQTGLKIFRILKKIREGQVDVNEIDSLPFAKEFYIKTGRSLGKLIQDMMGSDPDKALELFLGAFMRGEELNKAIQFHKELIAELSKEDGADLCTKVNRVLEKYGSRIDCENAEMSVEMAERLVREIIE.

This is an uncharacterized protein from Thermoproteus tenax virus 1 (strain KRA1) (TTV1).